Here is a 354-residue protein sequence, read N- to C-terminus: Rhodopsin (354 aa).

The Extracellular segment spans residues 1–36 (MNGTEGPNFYVPFSNKSGVVRSPFEYPQYYLAEPWQ). N-linked (GlcNAc...) asparagine glycosylation is found at N2 and N15. The chain crosses the membrane as a helical span at residues 37-61 (YSVLAAYMFLLILLGFPVNFLTLYV). Over 62–73 (TIQHKKLRTPLN) the chain is Cytoplasmic. Residues 74-96 (YILLNLAFANHFMVFGGFPVTMY) form a helical membrane-spanning segment. Residues 97–110 (SSMHGYFVFGQTGC) lie on the Extracellular side of the membrane. An intrachain disulfide couples C110 to C187. A helical membrane pass occupies residues 111-133 (YIEGFFATMGGEIALWSLVVLAI). Residues 134 to 136 (ERY) carry the 'Ionic lock' involved in activated form stabilization motif. Over 134 to 152 (ERYVVVCKPMSNFRFGENH) the chain is Cytoplasmic. Residues 153-173 (AIMGVMMTWIMALACAAPPLF) traverse the membrane as a helical segment. Residues 174–202 (GWSRYIPEGMQCSCGVDYYTLKPEVNNES) are Extracellular-facing. A helical transmembrane segment spans residues 203–224 (FVIYMFLVHFTIPLMIIFFCYG). At 225 to 252 (RLVCTVKEAAAQQQESATTQKAEKEVTR) the chain is on the cytoplasmic side. Residues 253–274 (MVIIMVVAFLICWVPYASVAFY) traverse the membrane as a helical segment. Topologically, residues 275–286 (IFSNQGTDFGPI) are extracellular. The chain crosses the membrane as a helical span at residues 287-308 (FMTVPAFFAKSSAIYNPVIYIV). K296 is modified (N6-(retinylidene)lysine). At 309–354 (LNKQFRNCMITTICCGKNPFGDDETTSAATSKTEASSVSSSQVSPA) the chain is on the cytoplasmic side. S-palmitoyl cysteine attachment occurs at residues C322 and C323. The segment at 332–354 (ETTSAATSKTEASSVSSSQVSPA) is disordered. Over residues 334 to 354 (TSAATSKTEASSVSSSQVSPA) the composition is skewed to low complexity.

This sequence belongs to the G-protein coupled receptor 1 family. Opsin subfamily. Post-translationally, contains one covalently linked retinal chromophore. Upon light absorption, the covalently bound 11-cis-retinal is converted to all-trans-retinal. After hydrolysis of the Schiff base and release of the covalently bound all-trans-retinal, active rhodopsin is regenerated by binding of a fresh molecule of 11-cis-retinal.

The protein localises to the membrane. It is found in the cell projection. Its subcellular location is the cilium. The protein resides in the photoreceptor outer segment. Its function is as follows. Photoreceptor required for image-forming vision at low light intensity. Required for photoreceptor cell viability after birth. Light-induced isomerization of 11-cis to all-trans retinal triggers a conformational change that activates signaling via G-proteins. Subsequent receptor phosphorylation mediates displacement of the bound G-protein alpha subunit by arrestin and terminates signaling. This chain is Rhodopsin (RHO), found in Ambystoma tigrinum (Eastern tiger salamander).